Consider the following 310-residue polypeptide: D-alanyl-D-alanine endopeptidase (310 aa).

Positions 1–25 are cleaved as a signal peptide; the sequence is MPKFRVSLFSLALMLAVPFAPQAVA. Catalysis depends on serine 67, which acts as the Acyl-ester intermediate. The Proton acceptor role is filled by lysine 70. Serine 124 is a catalytic residue. Residue lysine 231 coordinates substrate.

Belongs to the peptidase S11 family. Pbp8 is a proteolytic product of Pbp7.

The protein resides in the periplasm. Its function is as follows. Cell wall formation. May play a specialized role in remodeling the cell wall. Specifically hydrolyzes the DD-diaminopimelate-alanine bonds in high-molecular-mass murein sacculi. This chain is D-alanyl-D-alanine endopeptidase (pbpG), found in Escherichia coli (strain K12).